Here is a 101-residue protein sequence, read N- to C-terminus: DNA-binding protein Fis (101 aa).

The segment at residues 77–96 (QTRAANMLGINRGTLRKKLK) is a DNA-binding region (H-T-H motif).

Belongs to the transcriptional regulatory Fis family. As to quaternary structure, homodimer.

Functionally, activates ribosomal RNA transcription. Plays a direct role in upstream activation of rRNA promoters. The protein is DNA-binding protein Fis of Shewanella sediminis (strain HAW-EB3).